The sequence spans 312 residues: Homoserine kinase (312 aa).

91–101 (PVASGLGSSAC) is a binding site for ATP.

Belongs to the GHMP kinase family. Homoserine kinase subfamily.

The protein localises to the cytoplasm. The enzyme catalyses L-homoserine + ATP = O-phospho-L-homoserine + ADP + H(+). The protein operates within amino-acid biosynthesis; L-threonine biosynthesis; L-threonine from L-aspartate: step 4/5. In terms of biological role, catalyzes the ATP-dependent phosphorylation of L-homoserine to L-homoserine phosphate. This is Homoserine kinase from Blochmanniella pennsylvanica (strain BPEN).